Consider the following 591-residue polypeptide: Maintenance of mitochondrial morphology protein 1 (591 aa).

The Lumenal portion of the chain corresponds to 1-83; the sequence is MGFNIPWNGT…AQPSLSFTQG (83 aa). A helical transmembrane segment spans residues 84–104; that stretch reads LLVGQLSVVLLIGAFIKFFIF. At 105-591 the chain is on the cytoplasmic side; that stretch reads GEAPPPPSRS…GSMPDSVAVT (487 aa). Disordered stretches follow at residues 138–159, 170–189, 334–398, and 479–591; these read PRTL…SSST, YSAT…VHHS, PGTS…KHAH, and EAEA…VAVT. 2 stretches are compositionally biased toward polar residues: residues 146–159 and 170–179; these read STSN…SSST and YSATPTNPTS. Over residues 180-189 the composition is skewed to basic residues; the sequence is KHGRSRVHHS. The SMP-LTD domain maps to 192–462; sequence QPESLDWFNV…EPRVQVVGLP (271 aa). Polar residues predominate over residues 336–371; that stretch reads TSDQTMGPSASPPNQSTSTETASINDQTSEGQSTQR. Residues 379-389 are compositionally biased toward low complexity; it reads PTNSTPTAATA. Composition is skewed to gly residues over residues 496-525 and 536-550; these read TAGG…GMGY and GDGG…GAGG. Positions 563-578 are enriched in basic and acidic residues; it reads GGDDGEGPGRRSDERF.

It belongs to the MMM1 family. In terms of assembly, homodimer. Component of the ER-mitochondria encounter structure (ERMES) or MDM complex, composed of MMM1, MDM10, MDM12 and MDM34. An MMM1 homodimer associates with one molecule of MDM12 on each side in a pairwise head-to-tail manner, and the SMP-LTD domains of MMM1 and MDM12 generate a continuous hydrophobic tunnel for phospholipid trafficking.

The protein resides in the endoplasmic reticulum membrane. In terms of biological role, component of the ERMES/MDM complex, which serves as a molecular tether to connect the endoplasmic reticulum (ER) and mitochondria. Components of this complex are involved in the control of mitochondrial shape and protein biogenesis, and function in nonvesicular lipid trafficking between the ER and mitochondria. The MDM12-MMM1 subcomplex functions in the major beta-barrel assembly pathway that is responsible for biogenesis of all outer membrane beta-barrel proteins, and acts in a late step after the SAM complex. The MDM10-MDM12-MMM1 subcomplex further acts in the TOM40-specific pathway after the action of the MDM12-MMM1 complex. Essential for establishing and maintaining the structure of mitochondria and maintenance of mtDNA nucleoids. The chain is Maintenance of mitochondrial morphology protein 1 from Ajellomyces capsulatus (strain G186AR / H82 / ATCC MYA-2454 / RMSCC 2432) (Darling's disease fungus).